We begin with the raw amino-acid sequence, 289 residues long: Trimeric intracellular cation channel type B (289 aa).

At 1-18 the chain is on the lumenal side; that stretch reads MDVFAFFNLNELAFGLSK. The helical transmembrane segment at 19–36 threads the bilayer; the sequence is LPMFPYFDMAHYIISVMS. Residues 37-49 lie on the Cytoplasmic side of the membrane; the sequence is LREQPGALCVSQR. Residues 50–73 traverse the membrane as a helical segment; it reads SPLACWFSSMLYCFGGAVLSALML. Topologically, residues 74–85 are lumenal; sequence ADAPVAPLSNTT. The helical transmembrane segment at 86 to 103 threads the bilayer; the sequence is NLLLATLMWYLVFYCPLD. The Cytoplasmic portion of the chain corresponds to 104 to 107; it reads VVYS. A helical transmembrane segment spans residues 108–125; that stretch reads LASLLPLRLVLTAMKEVT. Positions 122 and 126 each coordinate a 1,2-diacyl-sn-glycero-3-phospho-(1D-myo-inositol-4,5-bisphosphate). Over 126–144 the chain is Lumenal; sequence RTWKVLSGVSQAGSKYSDA. A helical membrane pass occupies residues 145-162; it reads LFVMVAVGWAKGAGGGLI. Residues 163–183 lie on the Cytoplasmic side of the membrane; that stretch reads SNFEQLVRGVWKPETNELLKM. The helical transmembrane segment at 184–201 threads the bilayer; that stretch reads SYPTKVTLLGAVVFSLQQ. At 202 to 210 the chain is on the lumenal side; that stretch reads CRYLPIQTH. The chain crosses the membrane as a helical span at residues 211-230; sequence HLTFIYTLFTVTNKTRMMLL. The Cytoplasmic segment spans residues 231–289; the sequence is GSSSHPLSSLESFLYKTLFVRPLTDLSAEHTHSKHNGSVPEPTTAQTHTKEAEASKKTN. The tract at residues 260–289 is disordered; it reads HTHSKHNGSVPEPTTAQTHTKEAEASKKTN. Basic and acidic residues predominate over residues 278 to 289; that stretch reads HTKEAEASKKTN.

The protein belongs to the TMEM38 family. In terms of assembly, homotrimer; conformation seems to be controled by binding to diacylglycerol (DAG).

Its subcellular location is the endoplasmic reticulum membrane. The enzyme catalyses K(+)(in) = K(+)(out). Its activity is regulated as follows. Channel activity is activated by increased cytosolic Ca(2+) levels and blocked by luminal high Ca(2+) levels. Its function is as follows. Intracellular monovalent cation channel required for maintenance of rapid intracellular calcium release. Acts as a potassium counter-ion channel that functions in synchronization with calcium release from intracellular stores. Activated by increased cytosolic Ca(2+) levels. This is Trimeric intracellular cation channel type B (tmem38b) from Danio rerio (Zebrafish).